The following is a 363-amino-acid chain: Oxygen-dependent coproporphyrinogen-III oxidase (363 aa).

S119 provides a ligand contact to substrate. 2 residues coordinate a divalent metal cation: H123 and H133. H133 functions as the Proton donor in the catalytic mechanism. 135-137 (NYR) lines the substrate pocket. A divalent metal cation is bound by residues H167 and H197. Residues 287–322 (YVEFNLVWDRGTIFGLQTNGRTESILMSLPPLVRWE) are important for dimerization.

Belongs to the aerobic coproporphyrinogen-III oxidase family. As to quaternary structure, homodimer. It depends on a divalent metal cation as a cofactor.

Its subcellular location is the cytoplasm. The enzyme catalyses coproporphyrinogen III + O2 + 2 H(+) = protoporphyrinogen IX + 2 CO2 + 2 H2O. The protein operates within porphyrin-containing compound metabolism; protoporphyrin-IX biosynthesis; protoporphyrinogen-IX from coproporphyrinogen-III (O2 route): step 1/1. In terms of biological role, involved in the heme and chlorophyll biosynthesis. Catalyzes the aerobic oxidative decarboxylation of propionate groups of rings A and B of coproporphyrinogen-III to yield the vinyl groups in protoporphyrinogen-IX. This Parasynechococcus marenigrum (strain WH8102) protein is Oxygen-dependent coproporphyrinogen-III oxidase.